The sequence spans 485 residues: Sulfate adenylyltransferase subunit 1 (485 aa).

The region spanning 30 to 243 (KGLLRFLTCG…ELLETIDTQR (214 aa)) is the tr-type G domain. A G1 region spans residues 39–46 (GSVDDGKS). 39–46 (GSVDDGKS) is a GTP binding site. The tract at residues 97–101 (GITID) is G2. The G3 stretch occupies residues 118–121 (DTPG). Residues 118 to 122 (DTPGH) and 173 to 176 (NKMD) contribute to the GTP site. A G4 region spans residues 173–176 (NKMD). Residues 210–212 (SAL) are G5.

Belongs to the TRAFAC class translation factor GTPase superfamily. Classic translation factor GTPase family. CysN/NodQ subfamily. In terms of assembly, heterodimer composed of CysD, the smaller subunit, and CysN.

The enzyme catalyses sulfate + ATP + H(+) = adenosine 5'-phosphosulfate + diphosphate. The protein operates within sulfur metabolism; hydrogen sulfide biosynthesis; sulfite from sulfate: step 1/3. Functionally, with CysD forms the ATP sulfurylase (ATPS) that catalyzes the adenylation of sulfate producing adenosine 5'-phosphosulfate (APS) and diphosphate, the first enzymatic step in sulfur assimilation pathway. APS synthesis involves the formation of a high-energy phosphoric-sulfuric acid anhydride bond driven by GTP hydrolysis by CysN coupled to ATP hydrolysis by CysD. The sequence is that of Sulfate adenylyltransferase subunit 1 from Shewanella oneidensis (strain ATCC 700550 / JCM 31522 / CIP 106686 / LMG 19005 / NCIMB 14063 / MR-1).